The sequence spans 180 residues: Signaling threshold-regulating transmembrane adapter 1 (180 aa).

The Extracellular portion of the chain corresponds to 1–24 (MSRDYNCTTDDQLAWGIPSISHAW). N-linked (GlcNAc...) asparagine glycosylation occurs at Asn-6. The chain crosses the membrane as a helical; Signal-anchor for type III membrane protein span at residues 25–45 (GLWALLGVVTVLLLISLAALL). The Cytoplasmic portion of the chain corresponds to 46–180 (SQWTRGRRRN…AYANSQPAPS (135 aa)). Phosphoserine occurs at positions 63 and 66. At Tyr-73 the chain carries Phosphotyrosine. The tract at residues 73-76 (YGNL) is interaction with GRB2. Residues 81 to 103 (TGRLSQEPRSEEQDPPSSGGLAR) are disordered. Phosphoserine occurs at positions 85 and 90. Residues Tyr-111, Tyr-132, and Tyr-153 each carry the phosphotyrosine modification. The interaction with PTPN11 stretch occupies residues 130–135 (IKYCEV). Residues 153–156 (YASV) form an interaction with CSK region. At Ser-166 the chain carries Phosphoserine. A Phosphotyrosine modification is found at Tyr-172. Residues 172–175 (YANS) form an interaction with GRB2 region.

Homodimer; disulfide-linked. When phosphorylated, interacts with PTPN11/SHP2, GRB2 and CSK. In terms of processing, phosphorylated on tyrosines upon TCR activation; which leads to the recruitment of PTPN11, GRB2 and CSK. Expressed in thymus and spleen, with highest levels in immature thymocytes (at protein level).

It localises to the cell membrane. Functionally, negatively regulates T-cell antigen receptor (TCR)-mediated signaling. Involved in positive selection of T-cells. The polypeptide is Signaling threshold-regulating transmembrane adapter 1 (Sit1) (Mus musculus (Mouse)).